The chain runs to 393 residues: Homoserine O-succinyltransferase (393 aa).

The AB hydrolase-1 domain maps to 62–372 (NAVLVCHALN…PHGHDAFLLD (311 aa)). The Nucleophile role is filled by Ser-168. Residue Arg-238 coordinates substrate. Catalysis depends on residues Asp-333 and His-366. A substrate-binding site is contributed by Asp-367.

Belongs to the AB hydrolase superfamily. MetX family. Homodimer.

Its subcellular location is the cytoplasm. It catalyses the reaction L-homoserine + succinyl-CoA = O-succinyl-L-homoserine + CoA. It functions in the pathway amino-acid biosynthesis; L-methionine biosynthesis via de novo pathway; O-succinyl-L-homoserine from L-homoserine: step 1/1. In terms of biological role, transfers a succinyl group from succinyl-CoA to L-homoserine, forming succinyl-L-homoserine. The sequence is that of Homoserine O-succinyltransferase from Cupriavidus necator (strain ATCC 17699 / DSM 428 / KCTC 22496 / NCIMB 10442 / H16 / Stanier 337) (Ralstonia eutropha).